We begin with the raw amino-acid sequence, 420 residues long: Histidine--tRNA ligase (420 aa).

It belongs to the class-II aminoacyl-tRNA synthetase family. As to quaternary structure, homodimer.

It localises to the cytoplasm. The enzyme catalyses tRNA(His) + L-histidine + ATP = L-histidyl-tRNA(His) + AMP + diphosphate + H(+). This Ureaplasma parvum serovar 3 (strain ATCC 27815 / 27 / NCTC 11736) protein is Histidine--tRNA ligase.